Reading from the N-terminus, the 397-residue chain is MSPRNSALERFRQHQKIPEKRWQRLAFPDVGLLLCWLALIVIGMVMVTSSSLSEAHVERLSTHHFAIRQGIFYVGSSIFAYIAFMLGTNFYREKAKFILGLAFLGLLLVYAPGIGVVVNGSRRWLNLGVINLQVGEFAKLAVFIFTAAYLQHHTQRLDHSWQPIIGLLAVTACFALMFYLQPDFGTMVVIVATVLGMLFLSGVSIWRLLLLGVLIAPAMVWVLISESYRLRRLTTFINPWEYQYDEGYQLVNSLISFGRGGLFGVGLGESVQKHQYLPEAHTDFIFSIIAEETGLVGALIVMAILMILVWRAFAIGYLADRMRKRFSSLLAYGIGLWLGLQSLINIGVTTGALPTKGLTLPLISYGGSSILMTSIALAILARIDAESRFIARLEGKI.

The Cytoplasmic portion of the chain corresponds to 1 to 26; the sequence is MSPRNSALERFRQHQKIPEKRWQRLA. The chain crosses the membrane as a helical span at residues 27 to 47; the sequence is FPDVGLLLCWLALIVIGMVMV. Residues 48 to 69 lie on the Periplasmic side of the membrane; sequence TSSSLSEAHVERLSTHHFAIRQ. The helical transmembrane segment at 70–90 threads the bilayer; the sequence is GIFYVGSSIFAYIAFMLGTNF. At 91-96 the chain is on the cytoplasmic side; it reads YREKAK. Residues 97–117 form a helical membrane-spanning segment; the sequence is FILGLAFLGLLLVYAPGIGVV. At 118–126 the chain is on the periplasmic side; that stretch reads VNGSRRWLN. A helical membrane pass occupies residues 127 to 147; that stretch reads LGVINLQVGEFAKLAVFIFTA. Over 148–159 the chain is Cytoplasmic; the sequence is AYLQHHTQRLDH. A helical transmembrane segment spans residues 160–180; that stretch reads SWQPIIGLLAVTACFALMFYL. The Periplasmic segment spans residues 181–185; the sequence is QPDFG. Residues 186 to 206 traverse the membrane as a helical segment; the sequence is TMVVIVATVLGMLFLSGVSIW. Position 207 (R207) is a topological domain, cytoplasmic. Residues 208-228 form a helical membrane-spanning segment; it reads LLLLGVLIAPAMVWVLISESY. The Periplasmic segment spans residues 229–294; that stretch reads RLRRLTTFIN…IFSIIAEETG (66 aa). Residues 295 to 315 form a helical membrane-spanning segment; it reads LVGALIVMAILMILVWRAFAI. Residues 316–328 are Cytoplasmic-facing; it reads GYLADRMRKRFSS. The chain crosses the membrane as a helical span at residues 329–349; the sequence is LLAYGIGLWLGLQSLINIGVT. Residues 350–359 lie on the Periplasmic side of the membrane; sequence TGALPTKGLT. Residues 360-380 form a helical membrane-spanning segment; it reads LPLISYGGSSILMTSIALAIL. The Cytoplasmic segment spans residues 381-397; that stretch reads ARIDAESRFIARLEGKI.

This sequence belongs to the SEDS family. FtsW subfamily.

It is found in the cell inner membrane. The catalysed reaction is [GlcNAc-(1-&gt;4)-Mur2Ac(oyl-L-Ala-gamma-D-Glu-L-Lys-D-Ala-D-Ala)](n)-di-trans,octa-cis-undecaprenyl diphosphate + beta-D-GlcNAc-(1-&gt;4)-Mur2Ac(oyl-L-Ala-gamma-D-Glu-L-Lys-D-Ala-D-Ala)-di-trans,octa-cis-undecaprenyl diphosphate = [GlcNAc-(1-&gt;4)-Mur2Ac(oyl-L-Ala-gamma-D-Glu-L-Lys-D-Ala-D-Ala)](n+1)-di-trans,octa-cis-undecaprenyl diphosphate + di-trans,octa-cis-undecaprenyl diphosphate + H(+). It participates in cell wall biogenesis; peptidoglycan biosynthesis. In terms of biological role, peptidoglycan polymerase that is essential for cell division. The sequence is that of Probable peptidoglycan glycosyltransferase FtsW from Dichelobacter nodosus (strain VCS1703A).